A 239-amino-acid polypeptide reads, in one-letter code: Leucyl/phenylalanyl-tRNA--protein transferase (239 aa).

The protein belongs to the L/F-transferase family.

It is found in the cytoplasm. It carries out the reaction N-terminal L-lysyl-[protein] + L-leucyl-tRNA(Leu) = N-terminal L-leucyl-L-lysyl-[protein] + tRNA(Leu) + H(+). The enzyme catalyses N-terminal L-arginyl-[protein] + L-leucyl-tRNA(Leu) = N-terminal L-leucyl-L-arginyl-[protein] + tRNA(Leu) + H(+). It catalyses the reaction L-phenylalanyl-tRNA(Phe) + an N-terminal L-alpha-aminoacyl-[protein] = an N-terminal L-phenylalanyl-L-alpha-aminoacyl-[protein] + tRNA(Phe). Its function is as follows. Functions in the N-end rule pathway of protein degradation where it conjugates Leu, Phe and, less efficiently, Met from aminoacyl-tRNAs to the N-termini of proteins containing an N-terminal arginine or lysine. The sequence is that of Leucyl/phenylalanyl-tRNA--protein transferase from Aliivibrio fischeri (strain MJ11) (Vibrio fischeri).